Here is a 31-residue protein sequence, read N- to C-terminus: Cycloviolin-A (31 aa).

The cyclopeptide (Gly-Asn) cross-link spans 1–31; the sequence is GVIPCGESCVFIPCISAAIGCSCKNKVCYRN. Intrachain disulfides connect Cys-5–Cys-21, Cys-9–Cys-23, and Cys-14–Cys-28.

In terms of processing, this is a cyclic peptide.

Functionally, probably participates in a plant defense mechanism. Has anti-HIV activity. The protein is Cycloviolin-A of Leonia cymosa (Sacha uba).